The following is a 161-amino-acid chain: Nucleotide-binding protein Rfer_2692 (161 aa).

This sequence belongs to the YajQ family.

Nucleotide-binding protein. The protein is Nucleotide-binding protein Rfer_2692 of Albidiferax ferrireducens (strain ATCC BAA-621 / DSM 15236 / T118) (Rhodoferax ferrireducens).